The following is a 498-amino-acid chain: Isoflavone 2'-hydroxylase (498 aa).

The chain crosses the membrane as a helical span at residues 3-23 (ILSYLCYSLFYLSIFFIIRLL). Residue cysteine 436 participates in heme binding.

Belongs to the cytochrome P450 family. The cofactor is heme. Expressed constitutively in roots, but present at very low levels in uninfected stems and leaves.

The protein localises to the endoplasmic reticulum membrane. The catalysed reaction is formononetin + reduced [NADPH--hemoprotein reductase] + O2 = 2'-hydroxyformononetin + oxidized [NADPH--hemoprotein reductase] + H2O + H(+). Involved in the biosynthesis of the pterocarpin phytoalexins. Acts on isoflavones with a 4'-methoxy group on the B-ring, such as formononetin and biochanin A, and on pseudobaptigenin. Has a low activity with daidzein and genistein and no activity with the 7-O-methylated isoflavonoids isoformononetin and prunetin. This is Isoflavone 2'-hydroxylase from Medicago truncatula (Barrel medic).